Consider the following 370-residue polypeptide: Platelet-derived growth factor D (370 aa).

Positions 1 to 23 are cleaved as a signal peptide; sequence MQRLVLVSILLCANFSCYPDTFA. The 119-residue stretch at 52–170 folds into the CUB domain; that stretch reads REENIQVTSN…PGFKIYYSFV (119 aa). Residues Cys109 and Cys131 are joined by a disulfide bond. Asn276 carries N-linked (GlcNAc...) asparagine glycosylation. 2 disulfide bridges follow: Cys302–Cys360 and Cys306–Cys362.

This sequence belongs to the PDGF/VEGF growth factor family. As to quaternary structure, homodimer; disulfide-linked. Interacts with PDGFRB homodimers, and with heterodimers formed by PDGFRA and PDGFRB. Post-translationally, activated by proteolytic cleavage. Proteolytic removal of the N-terminal CUB domain releasing the core domain is necessary for unmasking the receptor-binding epitopes of the core domain. Cleavage after Arg-247 or Arg-249 by urokinase plasminogen activator gives rise to the active form. Expressed at high levels in developing heart, lung, kidney and some muscle derivatives. Moderately expressed in liver, brain and testis. In the kidney, localized to glomerular mesangial cells and vascular smooth muscle cells. Up-regulated in areas of renal fibrosis. In mice with unilateral ureteral obstruction, expressed in interstitial cells at day 4, with an increased to maximal expression at day 14.

The protein localises to the secreted. Its function is as follows. Growth factor that plays an essential role in the regulation of embryonic development, cell proliferation, cell migration, survival and chemotaxis. Potent mitogen for cells of mesenchymal origin. Plays an important role in wound healing. Has oncogenic potential and can induce tumor formation. Induces macrophage recruitment, increased interstitial pressure, and blood vessel maturation during angiogenesis. Can initiate events that lead to a mesangial proliferative glomerulonephritis, including influx of monocytes and macrophages and production of extracellular matrix. This is Platelet-derived growth factor D (Pdgfd) from Mus musculus (Mouse).